A 684-amino-acid chain; its full sequence is MLACLTRGNLLDVLQEGFNEQQLQAYVAWVNAQLKKRPSVKPVQDLRQDLRDGVILAYLIEIVAGEKLSGVQLSPSNQQEMKSNVERVLQFVASKNIRMHQTSAKDIVEGNLKSIMRLVLALAAHFKPGSSRTVSQGRDSRTSVQSHQPHCATAVAQGAAAALADVCHDVSRSGRDVFRYRQRNASVDEEIENPYWSVRALVQQYEGQQRSPSESSCSSLTSPSPIHSAKSESIITQSEEKADFVIIPSEGIENRTDETGSPLSRDWRPGSPGTYLEATWEEQLLEQQEHLEKEMEEAKKMISGLQALLLNGSLPEDEQERPVALCEPGVNPEEQLIIIRSRLDQSMEENQDLKKELLKCKQEARNLQGIKDALQQRLTQQDTSVLQLKQELLRANMDKDELHNQNVDLQRKLDERNRLLGEYKKDLGQKDRLLQQQQAKLEDALRKLSDASYQQVDLERELEQKDVLLAHRVKGDTDEVTNYNSHSSQRNGFVLPVAGRAATTATHRGPQSSDLQLVRDALRSLRNSFSGHDPQHHTIDSLEQGISSLIERLHVIETQKKQERKVRGRSPRNQASSEYRASWPPNSTLPHSQSSPAVSNTCTKVLYFTDRSLTPFMVNIPKRLGEVTLKDFKAAIDREGSHRYHFKALDPEFGTVKEEVFHDDDAIPGWEGKIVAWVEDHREN.

Residues 20 to 127 enclose the Calponin-homology (CH) domain; sequence EQQLQAYVAW…LVLALAAHFK (108 aa). The interval 127–300 is actin-binding; the sequence is KPGSSRTVSQ…LEKEMEEAKK (174 aa). At Ser186 the chain carries Phosphoserine. Residues 207-235 form a disordered region; that stretch reads GQQRSPSESSCSSLTSPSPIHSAKSESII. The segment covering 211-228 has biased composition (low complexity); the sequence is SPSESSCSSLTSPSPIHS. Ser231 is subject to Phosphoserine. 2 coiled-coil regions span residues 277–308 and 336–461; these read EATW…LQAL and LIII…LERE. Residues 560 to 597 are disordered; sequence KKQERKVRGRSPRNQASSEYRASWPPNSTLPHSQSSPA. Polar residues predominate over residues 571–597; that stretch reads PRNQASSEYRASWPPNSTLPHSQSSPA. Position 592 is a phosphoserine (Ser592). The region spanning 602–682 is the DIX domain; it reads CTKVLYFTDR…KIVAWVEDHR (81 aa).

This sequence belongs to the DIXDC1 family. In terms of assembly, may bind filamentous actin. Interacts with the complex composed of DVL2 and Rac. Interacts with AXIN1; competes with MAP3K1. Interacts with MAP3K4 preventing MAP3K4 interaction with AXIN1. Directly interacts (via DIX domain) with DVL2 (via DIX domain). Interacts with gamma-tubulin. Phosphorylated on tyrosine and serine residues. In terms of processing, polyubiquitinated, leading to its proteasomal degradation. WNT3A signaling increases DIXDC1 protein levels by inhibiting its ubiquitination and subsequent degradation.

It localises to the cell junction. The protein resides in the focal adhesion. It is found in the cytoplasm. The protein localises to the cytoskeleton. Its subcellular location is the stress fiber. Its function is as follows. Positive effector of the Wnt signaling pathway; activates WNT3A signaling via DVL2. Regulates JNK activation by AXIN1 and DVL2. The polypeptide is Dixin (Dixdc1) (Rattus norvegicus (Rat)).